We begin with the raw amino-acid sequence, 315 residues long: Protein sprouty homolog 2 (315 aa).

Residues 1–15 (MEARAQSGNGSQPLL) show a composition bias toward polar residues. 2 disordered regions span residues 1 to 39 (MEARAQSGNGSQPLLQTPRDGGRQRGEPDPRDALTQQVH) and 51 to 140 (NTNE…GSSF). The segment covering 20 to 32 (DGGRQRGEPDPRD) has biased composition (basic and acidic residues). Residues 108–140 (SRSISTVSSGSRSSTRTSTSSSSSEQRLLGSSF) show a composition bias toward low complexity. Positions 118–315 (SRSSTRTSTS…VPPRNFEKPT (198 aa)) are required for interaction with CAV1. Positions 177–291 (RCEDCGKCKC…CYDRVNRPGC (115 aa)) constitute an SPR domain. Positions 178-315 (CEDCGKCKCK…VPPRNFEKPT (138 aa)) are required for interaction with TESK1.

This sequence belongs to the sprouty family. Forms heterodimers with SPRY1. Forms a tripartite complex containing GAB1, METTL13 and SPRY2. Within the complex interacts with METTL13. Interacts with RAF1. Interacts (via C-terminus) with TESK1 (via C-terminus); the interaction disrupts SPRY2 interaction with GRB2, potentially via disruption of SPRY2 serine dephosphorylation. Interacts with PPP2R1A/PP2A-A and PPP2CA/PP2A-C; the interaction with PPP2CA/PP2A-C is inhibited by interaction with TESK1, possibly by vesicular sequestration of SPRY2. Inhibition of the interaction with the serine/threonine-protein phosphatase 2A (PP2A) holoenzyme results in loss of PP2A-mediated dephosphorylation, resulting in the loss of SPRY2 interaction with GRB2. Interacts with GRB2. Interacts with CBL/C-CBL; the interaction inhibits CBL-mediated ubiquitination of EGFR. Interacts (via C-terminus) with CAV1 (via C-terminus). In terms of processing, cleaved at Pro-144 by the prolyl endopeptidase FAP (seprase) activity (in vitro).

It localises to the cytoplasm. It is found in the cytoskeleton. The protein resides in the cell projection. The protein localises to the ruffle membrane. Its function is as follows. Antagonist of fibroblast growth factor (FGF) pathways via inhibition of FGF-mediated phosphorylation of ERK1/2. Thereby acts as an antagonist of FGF-induced retinal lens fiber differentiation, may inhibit limb bud outgrowth and may negatively modulate respiratory organogenesis. Inhibits TGFB-induced epithelial-to-mesenchymal transition in retinal lens epithelial cells. Inhibits CBL/C-CBL-mediated EGFR ubiquitination. The chain is Protein sprouty homolog 2 (SPRY2) from Macaca fascicularis (Crab-eating macaque).